The following is a 501-amino-acid chain: MKPRSSRDGHNAAAAAALLLAALVLSGDVLPAVVAGGAPSFNYKDALTKSIMFLEAQRSGKLPPTNRIKWRGDSGMEDGKLANVDLTGGYYDAGDNVKYGLPLAFTVTTLAWTAMAFEKELKAARELENVHAAIRWGTDYFLKAATKKDHLWVQVGDPNADHQCWVRPENMPTPRTLYQINDKTPGSEIAAETAAAMTASSMVFRKDKPYSRRLLNKAKLLFQFAKTHQGTYDGECPFYCSYSGYNDELLWAATWLYLATKRQVYADFIGHEAISSSVAEFSWDLKFPGAQVLLAELNMTSSGGLQSFKSQADNFVCAVLPDTPFHQVSITPGGMIHLRDGANSQYVTSTAFLFVAYSDILRRINQPVMCGAQAVQPARLLQFAKQQIDYLLGANPRGRSYVVGFGVNPPTQPHHRGASTPVLPPGYQVNCGMSFSEWFTPDRPNPNELTGAIMGGPDGGDNFSDKRGNSSCTEPCTYINSLSIGPLAALAIRGPNLIATQ.

The N-terminal stretch at Met-1 to Ala-35 is a signal peptide. Asp-95 (nucleophile) is an active-site residue. A glycan (N-linked (GlcNAc...) asparagine) is linked at Asn-298. His-414 is an active-site residue. N-linked (GlcNAc...) asparagine glycosylation occurs at Asn-462. Residue Asp-465 is part of the active site. The N-linked (GlcNAc...) asparagine glycan is linked to Asn-469. Glu-474 is an active-site residue.

The protein belongs to the glycosyl hydrolase 9 (cellulase E) family.

Its subcellular location is the secreted. It catalyses the reaction Endohydrolysis of (1-&gt;4)-beta-D-glucosidic linkages in cellulose, lichenin and cereal beta-D-glucans.. The chain is Endoglucanase 8 from Oryza sativa subsp. japonica (Rice).